We begin with the raw amino-acid sequence, 419 residues long: UDP-N-acetylglucosamine 1-carboxyvinyltransferase (419 aa).

22 to 23 (KN) lines the phosphoenolpyruvate pocket. R91 is a UDP-N-acetyl-alpha-D-glucosamine binding site. The active-site Proton donor is C115. A 2-(S-cysteinyl)pyruvic acid O-phosphothioketal modification is found at C115. UDP-N-acetyl-alpha-D-glucosamine is bound by residues 120–124 (RPVDL), 160–163 (KVSV), D305, and I327.

It belongs to the EPSP synthase family. MurA subfamily.

The protein localises to the cytoplasm. It catalyses the reaction phosphoenolpyruvate + UDP-N-acetyl-alpha-D-glucosamine = UDP-N-acetyl-3-O-(1-carboxyvinyl)-alpha-D-glucosamine + phosphate. It functions in the pathway cell wall biogenesis; peptidoglycan biosynthesis. With respect to regulation, in vitro inhibited by covalent binding of fosfomycin and the fungal product terreic acid in the presence of substrate UDP-N-acetylglucosamine, with an inactivation rate constant of 130 M(-1)sec(-1) for terreic acid. Functionally, cell wall formation. Adds enolpyruvyl to UDP-N-acetylglucosamine. Target for the antibiotic fosfomycin. This chain is UDP-N-acetylglucosamine 1-carboxyvinyltransferase, found in Enterobacter cloacae subsp. cloacae (strain ATCC 13047 / DSM 30054 / NBRC 13535 / NCTC 10005 / WDCM 00083 / NCDC 279-56).